A 455-amino-acid chain; its full sequence is UPF0053 protein MT1890 (455 aa).

The CNNM transmembrane domain occupies 2 to 205 (NLTDTVATIL…ARSGALDDAT (204 aa)). The next 4 helical transmembrane spans lie at 6–26 (TVATILAILALTAGTGVFVAA), 68–88 (LGISITTLATGYLTEPLVAEL), 106–126 (LITFFALVIVTSLSMVFGELV), and 148–168 (LFSLLLTPAIRLTNGAANWIV). CBS domains lie at 224–285 (MTPR…AHTL) and 286–346 (LTTV…VRDE).

The protein belongs to the UPF0053 family.

It is found in the cell membrane. The protein is UPF0053 protein MT1890 of Mycobacterium tuberculosis (strain CDC 1551 / Oshkosh).